A 297-amino-acid chain; its full sequence is Transmembrane protein 169 (297 aa).

The interval 1–85 (MEEPTAVEGQ…KEEEGDDFLD (85 aa)) is disordered. The Extracellular portion of the chain corresponds to 1 to 159 (MEEPTAVEGQ…CQMGADRGPH (159 aa)). A compositionally biased stretch (acidic residues) spans 61–85 (KTDEEPGESEGGDQPKEEEGDDFLD). Residues 160-180 (VVLWTLICLPVVFILSFVVSF) traverse the membrane as a helical segment. The Cytoplasmic portion of the chain corresponds to 181–210 (YYGTITWYNIFLVYNEERTFWHKISYCPCL). The helical transmembrane segment at 211–231 (VLFYPVLIMAMASSLGLYAAV) threads the bilayer. Residues 232 to 297 (VQLSWSWEAW…PIQEVETSTV (66 aa)) are Extracellular-facing.

The protein localises to the membrane. The polypeptide is Transmembrane protein 169 (TMEM169) (Homo sapiens (Human)).